A 431-amino-acid polypeptide reads, in one-letter code: CCA tRNA nucleotidyltransferase 1, mitochondrial (431 aa).

Residues methionine 1 to threonine 31 constitute a mitochondrion transit peptide. Residues glycine 61 and arginine 64 each coordinate ATP. Residues glycine 61 and arginine 64 each coordinate CTP. Residues aspartate 74 and aspartate 76 each contribute to the Mg(2+) site. ATP-binding residues include arginine 148, aspartate 191, arginine 194, arginine 197, and arginine 200. Arginine 148, aspartate 191, arginine 194, arginine 197, and arginine 200 together coordinate CTP.

It belongs to the tRNA nucleotidyltransferase/poly(A) polymerase family. Monomer, and homodimer. Requires Mg(2+) as cofactor. In terms of tissue distribution, expressed ubiquitously during early embryogenesis.

The protein localises to the mitochondrion. The protein resides in the cytoplasm. It is found in the nucleus. It catalyses the reaction a tRNA precursor + 2 CTP + ATP = a tRNA with a 3' CCA end + 3 diphosphate. The catalysed reaction is a tRNA with a 3' CCA end + 2 CTP + ATP = a tRNA with a 3' CCACCA end + 3 diphosphate. Nucleotidyltransferase that catalyzes the addition and repair of the essential 3'-terminal CCA sequence in tRNAs, which is necessary for the attachment of amino acids to the 3' terminus of tRNA molecules, using CTP and ATP as substrates. tRNA 3'-terminal CCA addition is required both for tRNA processing and repair. Promotes tRNA repair and recycling downstream of the ribosome-associated quality control (RQC) pathway by mediating addition of the tRNA 3'-terminal CCA following cleavage by ankzf1 and repair by elac1. Also involved in tRNA surveillance by mediating tandem CCA addition to generate a CCACCA at the 3' terminus of unstable tRNAs and tRNA-like transcripts. While stable tRNAs receive only 3'-terminal CCA, unstable tRNAs beginning with GG are marked with CCACCA and rapidly degraded. The structural flexibility of RNA controls the choice between CCA versus CCACCA addition: following the first CCA addition cycle, nucleotide-binding to the active site triggers a clockwise screw motion, producing torque on the RNA. This ejects stable RNAs, whereas unstable RNAs are refolded while bound to the enzyme and subjected to a second CCA catalytic cycle. This is CCA tRNA nucleotidyltransferase 1, mitochondrial from Danio rerio (Zebrafish).